The sequence spans 391 residues: Ferrochelatase (391 aa).

The Fe cation site is built by His-196 and Glu-281.

Belongs to the ferrochelatase family.

Its subcellular location is the cytoplasm. The catalysed reaction is heme b + 2 H(+) = protoporphyrin IX + Fe(2+). Its pathway is porphyrin-containing compound metabolism; protoheme biosynthesis; protoheme from protoporphyrin-IX: step 1/1. In terms of biological role, catalyzes the ferrous insertion into protoporphyrin IX. The protein is Ferrochelatase of Synechococcus sp. (strain WH7803).